The sequence spans 465 residues: Cytochrome P450 85A2 (465 aa).

A helical transmembrane segment spans residues 2–22 (GIMMMILGLLVIIVCLCTALL). Heme is bound at residue Cys415. Residue Cys462 is the site of S-farnesyl cysteine attachment. Positions 462 to 465 (CSPY) match the Farnesylation CAAX motif motif.

This sequence belongs to the cytochrome P450 family. Heme is required as a cofactor. In terms of processing, isoprenylated (farnesylated); this addition of a 15-carbon farnesyl isoprenoid to the carboxy terminus is required for endoplasmic reticulum localization and essential for the biosynthesis of brassinolide. Expressed in stems, hypocotyls, leaves, siliques, shoots, and roots, with a higher expression in apical shoots.

It is found in the membrane. The protein localises to the endoplasmic reticulum. The catalysed reaction is 6-deoxoteasterone + reduced [NADPH--hemoprotein reductase] + O2 = 6alpha-hydroxyteasterone + oxidized [NADPH--hemoprotein reductase] + H2O + H(+). The enzyme catalyses 6alpha-hydroxytyphasterol + reduced [NADPH--hemoprotein reductase] + O2 = teasterone + oxidized [NADPH--hemoprotein reductase] + 2 H2O + H(+). It carries out the reaction 3-dehydro-6-deoxoteasterone + reduced [NADPH--hemoprotein reductase] + O2 = 3-dehydro-6alpha-hydroxyteasterone + oxidized [NADPH--hemoprotein reductase] + H2O + H(+). It catalyses the reaction 3-dehydro-6alpha-hydroxyteasterone + reduced [NADPH--hemoprotein reductase] + O2 = 3-dehydroteasterone + oxidized [NADPH--hemoprotein reductase] + 2 H2O + H(+). The catalysed reaction is 6-deoxotyphasterol + reduced [NADPH--hemoprotein reductase] + O2 = 6alpha-hydroxytyphasterol + oxidized [NADPH--hemoprotein reductase] + H2O + H(+). The enzyme catalyses 6alpha-hydroxytyphasterol + reduced [NADPH--hemoprotein reductase] + O2 = typhasterol + oxidized [NADPH--hemoprotein reductase] + 2 H2O + H(+). It carries out the reaction 6-deoxocastasterone + reduced [NADPH--hemoprotein reductase] + O2 = 6alpha-hydroxycastasterone + oxidized [NADPH--hemoprotein reductase] + H2O + H(+). It catalyses the reaction 6alpha-hydroxycastasterone + reduced [NADPH--hemoprotein reductase] + O2 = castasterone + oxidized [NADPH--hemoprotein reductase] + 2 H2O + H(+). The catalysed reaction is 6-deoxo-28-norteasterone + 2 reduced [NADPH--hemoprotein reductase] + 2 O2 = 28-norteasterone + 2 oxidized [NADPH--hemoprotein reductase] + 3 H2O + 2 H(+). The enzyme catalyses 6-deoxo-28-norteasterone + reduced [NADPH--hemoprotein reductase] + O2 = 6alpha-hydroxy-28-norteasterone + oxidized [NADPH--hemoprotein reductase] + H2O + H(+). It carries out the reaction 6alpha-hydroxy-28-norteasterone + reduced [NADPH--hemoprotein reductase] + O2 = 28-norteasterone + oxidized [NADPH--hemoprotein reductase] + 2 H2O + H(+). It catalyses the reaction 6-deoxo-28-nortyphasterol + 2 reduced [NADPH--hemoprotein reductase] + 2 O2 = 28-nortyphasterol + 2 oxidized [NADPH--hemoprotein reductase] + 3 H2O + 2 H(+). The catalysed reaction is 6-deoxo-28-nortyphasterol + reduced [NADPH--hemoprotein reductase] + O2 = 6alpha-hydroxy-28-nortyphasterol + oxidized [NADPH--hemoprotein reductase] + H2O + H(+). The enzyme catalyses 6alpha-hydroxy-28-nortyphasterol + reduced [NADPH--hemoprotein reductase] + O2 = 28-nortyphasterol + oxidized [NADPH--hemoprotein reductase] + 2 H2O + H(+). It carries out the reaction 6-deoxo-28-norcastasterone + 2 reduced [NADPH--hemoprotein reductase] + 2 O2 = 28-norcastasterone + 2 oxidized [NADPH--hemoprotein reductase] + 3 H2O + 2 H(+). It catalyses the reaction 6-deoxo-28-norcastasterone + reduced [NADPH--hemoprotein reductase] + O2 = 6alpha-hydroxy-28-norcastasterone + oxidized [NADPH--hemoprotein reductase] + H2O + H(+). The catalysed reaction is 6alpha-hydroxy-28-norcastasterone + reduced [NADPH--hemoprotein reductase] + O2 = 28-norcastasterone + oxidized [NADPH--hemoprotein reductase] + 2 H2O + H(+). The enzyme catalyses 3-dehydro-6-deoxo-28-norteasterone + 2 reduced [NADPH--hemoprotein reductase] + 2 O2 = 6-dehydro-28-norteasterone + 2 oxidized [NADPH--hemoprotein reductase] + 3 H2O + 2 H(+). It carries out the reaction 3-dehydro-6-deoxo-28-norteasterone + reduced [NADPH--hemoprotein reductase] + O2 = 3-dehydro-6alpha-hydroxy-28-norteasterone + oxidized [NADPH--hemoprotein reductase] + H2O + H(+). It catalyses the reaction 3-dehydro-6alpha-hydroxy-28-norteasterone + reduced [NADPH--hemoprotein reductase] + O2 = 6-dehydro-28-norteasterone + oxidized [NADPH--hemoprotein reductase] + 2 H2O + H(+). The catalysed reaction is teasterone + reduced [NADPH--hemoprotein reductase] + O2 = 7-oxateasterone + oxidized [NADPH--hemoprotein reductase] + H2O + H(+). The enzyme catalyses castasterone + reduced [NADPH--hemoprotein reductase] + O2 = brassinolide + oxidized [NADPH--hemoprotein reductase] + H2O + H(+). It carries out the reaction typhasterol + reduced [NADPH--hemoprotein reductase] + O2 = 7-oxatyphasterol + oxidized [NADPH--hemoprotein reductase] + H2O + H(+). It catalyses the reaction 6-deoxocastasterone + 2 reduced [NADPH--hemoprotein reductase] + 2 O2 = castasterone + 2 oxidized [NADPH--hemoprotein reductase] + 3 H2O + 2 H(+). The catalysed reaction is 6-deoxoteasterone + 2 reduced [NADPH--hemoprotein reductase] + 2 O2 = teasterone + 2 oxidized [NADPH--hemoprotein reductase] + 3 H2O + 2 H(+). The enzyme catalyses 6-deoxotyphasterol + 2 reduced [NADPH--hemoprotein reductase] + 2 O2 = typhasterol + 2 oxidized [NADPH--hemoprotein reductase] + 3 H2O + 2 H(+). It carries out the reaction 3-dehydro-6-deoxoteasterone + 2 reduced [NADPH--hemoprotein reductase] + 2 O2 = 3-dehydroteasterone + 2 oxidized [NADPH--hemoprotein reductase] + 3 H2O + 2 H(+). Its pathway is plant hormone biosynthesis; brassinosteroid biosynthesis. Mediates Baeyer-Villiger oxidation and catalyzes the C6-oxidation step and lactonization in brassinosteroids biosynthesis. Converts 6-deoxocastasterone (6-deoxoCS) to castasterone (CS), and castasterone to brassinolide (BL). May also convert 6-deoxoteasterone (6-deoxoTE) to teasterone (TE), 3-dehydro-6-deoxoteasterone (6-deoxo3DT, 6-deoxo-3-DHT) to 3-dehydroteasterone (3DT, 3-DHT), and 6-deoxotyphasterol (6-deoxoTY) to typhasterol (TY). Also seems to be able to convert teasterone (TE) and typhasterol (TY) to 7-oxateasterone (7-OXTE) and 7-oxatyphasterol (7-OXTY), respectively. Catalyzes the conversion of 6-deoxo-28-norteasterone (6-deoxo-28-norTE) to 28-norteasterone (28-norTE), 6-deoxo-28-nordeoxoteasterone (6-deoxo-28-nor-3-DHT) to 28-nordeoxoteasterone (28-nor-3-DHT), 6-deoxo-28-nortyphasterol (6-deoxo-28-norTY) to 28-nortyphasterol (28-norTY) and 6-deoxo-28-norcastasterone (6-deoxo-28-norCS) to 28-norcastasterone (28-norCS). Involved in a negative regulation of responses to abscisic acid (ABA) and drought tolerance. The polypeptide is Cytochrome P450 85A2 (CYP85A2) (Arabidopsis thaliana (Mouse-ear cress)).